The chain runs to 298 residues: Cyclin-D4-2 (298 aa).

The protein belongs to the cyclin family. Cyclin D subfamily. As to quaternary structure, interacts with CDKA-1 to form a kinase complex.

Its function is as follows. May promote cell division. In Arabidopsis thaliana (Mouse-ear cress), this protein is Cyclin-D4-2 (CYCD4-2).